We begin with the raw amino-acid sequence, 132 residues long: SH2 domain-containing protein 1B (132 aa).

Positions Y5–I101 constitute an SH2 domain. Y127 bears the Phosphotyrosine mark.

Binds to the phosphorylated receptors CD84, SLAMF1, LY9 and CD244. Does not bind to non-phosphorylated SLAMF1. Interacts with SLAMF7 (via ITSM phosphorylated on 'Tyr-304'). Interacts with Src kinases HCK, LYN, FYN, FGR and LCK (via kinase domains). Interacts (phosphorylated at Tyr-127) with PLCG1.

In terms of biological role, cytoplasmic adapter regulating receptors of the signaling lymphocytic activation molecule (SLAM) family such as CD84, SLAMF1, LY9 and CD244. In SLAM signaling seems to cooperate with SH2D1A/SAP. Plays a role in regulation of effector functions of natural killer (NK) cells by controlling signal transduction through CD244/2B4 without effecting its tyrosine phosphorylation; downstream signaling involves PLCG1 and ERK activation. Activation of SLAMF7-mediated NK cell function does not effect receptor tyrosine phosphorylation but distal signaling. In the context of NK cell-mediated cytotoxicity does not enhance conjugate formation with target cells but stimulates polarization of the microtubule-organizing center and cytotoxic granules toward the NK cell synapse. Negatively regulates CD40-induced cytokine production in dendritic cells downstream of SLAM family receptors probably by inducing activation of the PI3K pathway to inhibit p38 MAPK and JNK activation. This is SH2 domain-containing protein 1B (SH2D1B) from Homo sapiens (Human).